The sequence spans 536 residues: Phosphoenolpyruvate carboxykinase (ATP) (536 aa).

Residues arginine 61, tyrosine 195, and lysine 201 each contribute to the substrate site. ATP is bound by residues lysine 201, histidine 220, and 236 to 244 (GLSGTGKTT). The Mn(2+) site is built by lysine 201 and histidine 220. Aspartate 257 provides a ligand contact to Mn(2+). ATP is bound by residues glutamate 285, arginine 322, and threonine 447. Position 322 (arginine 322) interacts with substrate.

It belongs to the phosphoenolpyruvate carboxykinase (ATP) family. Requires Mn(2+) as cofactor.

It localises to the cytoplasm. It carries out the reaction oxaloacetate + ATP = phosphoenolpyruvate + ADP + CO2. It functions in the pathway carbohydrate biosynthesis; gluconeogenesis. Functionally, involved in the gluconeogenesis. Catalyzes the conversion of oxaloacetate (OAA) to phosphoenolpyruvate (PEP) through direct phosphoryl transfer between the nucleoside triphosphate and OAA. The polypeptide is Phosphoenolpyruvate carboxykinase (ATP) (Allorhizobium ampelinum (strain ATCC BAA-846 / DSM 112012 / S4) (Agrobacterium vitis (strain S4))).